The primary structure comprises 321 residues: N-acetyl-gamma-glutamyl-phosphate reductase (321 aa).

Cysteine 131 is a catalytic residue.

It belongs to the NAGSA dehydrogenase family. Type 1 subfamily.

The protein localises to the cytoplasm. The catalysed reaction is N-acetyl-L-glutamate 5-semialdehyde + phosphate + NADP(+) = N-acetyl-L-glutamyl 5-phosphate + NADPH + H(+). The protein operates within amino-acid biosynthesis; L-arginine biosynthesis; N(2)-acetyl-L-ornithine from L-glutamate: step 3/4. Functionally, catalyzes the NADPH-dependent reduction of N-acetyl-5-glutamyl phosphate to yield N-acetyl-L-glutamate 5-semialdehyde. This chain is N-acetyl-gamma-glutamyl-phosphate reductase, found in Christiangramia forsetii (strain DSM 17595 / CGMCC 1.15422 / KT0803) (Gramella forsetii).